A 270-amino-acid polypeptide reads, in one-letter code: Glucosamine-6-phosphate deaminase (270 aa).

Asp72 functions as the Proton acceptor; for enolization step in the catalytic mechanism. Catalysis depends on Asp141, which acts as the For ring-opening step. Residue His143 is the Proton acceptor; for ring-opening step of the active site. Glu148 (for ring-opening step) is an active-site residue.

Belongs to the glucosamine/galactosamine-6-phosphate isomerase family. NagB subfamily.

It catalyses the reaction alpha-D-glucosamine 6-phosphate + H2O = beta-D-fructose 6-phosphate + NH4(+). Its pathway is amino-sugar metabolism; N-acetylneuraminate degradation; D-fructose 6-phosphate from N-acetylneuraminate: step 5/5. Allosterically activated by N-acetylglucosamine 6-phosphate (GlcNAc6P). Functionally, catalyzes the reversible isomerization-deamination of glucosamine 6-phosphate (GlcN6P) to form fructose 6-phosphate (Fru6P) and ammonium ion. The sequence is that of Glucosamine-6-phosphate deaminase from Bacteroides fragilis (strain ATCC 25285 / DSM 2151 / CCUG 4856 / JCM 11019 / LMG 10263 / NCTC 9343 / Onslow / VPI 2553 / EN-2).